The chain runs to 154 residues: CS6 fimbrial subunit A (154 aa).

Positions 1–18 are cleaved as a signal peptide; sequence MKKTIGLILILASFGSHA.

Its subcellular location is the fimbrium. Its function is as follows. Fimbriae (also called pili), polar filaments radiating from the surface of the bacterium to a length of 0.5-1.5 micrometers and numbering 100-300 per cell, enable bacteria to colonize the epithelium of specific host organs. This is CS6 fimbrial subunit A (cssA) from Escherichia coli.